A 217-amino-acid polypeptide reads, in one-letter code: Large ribosomal subunit protein uL29m (217 aa).

This sequence belongs to the universal ribosomal protein uL29 family. In terms of assembly, component of the mitochondrial large ribosomal subunit. Mature mitochondrial ribosomes consist of a small (37S) and a large (54S) subunit. The 37S subunit contains at least 33 different proteins and 1 molecule of RNA (15S). The 54S subunit contains at least 45 different proteins and 1 molecule of RNA (21S).

It is found in the mitochondrion. In Aspergillus clavatus (strain ATCC 1007 / CBS 513.65 / DSM 816 / NCTC 3887 / NRRL 1 / QM 1276 / 107), this protein is Large ribosomal subunit protein uL29m (mrpl4).